The sequence spans 271 residues: Dirigent protein 17 (271 aa).

The span at 1 to 12 (MEDTGSIKQEAQ) shows a compositional bias: polar residues. A disordered region spans residues 1 to 22 (MEDTGSIKQEAQSHPPGIFEIP). N255 is a glycosylation site (N-linked (GlcNAc...) asparagine).

The protein belongs to the plant dirigent protein family. In terms of assembly, homodimer.

The protein resides in the secreted. The protein localises to the extracellular space. It is found in the apoplast. Its function is as follows. Dirigent proteins impart stereoselectivity on the phenoxy radical-coupling reaction, yielding optically active lignans from two molecules of coniferyl alcohol in the biosynthesis of lignans, flavonolignans, and alkaloids and thus plays a central role in plant secondary metabolism. The sequence is that of Dirigent protein 17 (DIR17) from Arabidopsis thaliana (Mouse-ear cress).